We begin with the raw amino-acid sequence, 1068 residues long: MHQPPESTAAAAAAADISARKMAHPAVFPRRGSGSGSASALNAAGTGVGSSATSSEDFPPPSLLQPPPPAASSTSGPQPPPPQSLNLLSQAQLQAQPLAPGGTQMKKKSGFQITSVTPAQISASISSNNSIAEDTESYDDLDESHTEDLSSSEILDVSLSRATDLGEPERSSSEETLNNFQEAETPGAVSPNQPHLPQPHLPHLPQQNVVINGNAHPHHLHHHHHIHHGHHLQHGHHHPSHVAVASASIPGGPPSSPVSRKLSTTGSSDSITPVAPTSAVSSSGSPASVMTNIRAPSTTGGIGISSVTGTSTVNNVNITAVGSLNPNMTSSMLGNANISTSNIPSAASVSVGPGVTSGVNVNILSGMGNGTISSSAAVSSVPNAAAGMTGGSVSSQQQQPTVNTSRFRVVKLDSSSEPFKKGRWTCTEFYEKENAVPATEGVLINKVVETVKQNPIEVTSERESTSGSSVSSSVSTLSHYTESVGSGEMGAPTVVVQQQQQQQQPALQGVTLQQMDFGSTGPQSIPAVSIPQSISQSQISQVQLQSQELSYQQKQSLQPVPLQATMSAATGIQPSPVNVVGVTSALGQQPSISSLAQPQLPYSQAAPPVQTPLPGAPPPQQLQYGQQQPMVSTQMAPGHVKSVTQNPASEYVQQQPILQTAMSSGQPSSAGVGAGTTVIPVAQPQGIQLPVQPTAVPAQPAGASVQPVGQAQAAVSAVPTGSQIANIGQQANIPTAVQQPSTQVPPSVIQQGAPPSSQVVPPAQTGIIHQGVQTSAASLPQQLVIASQSTLLTVPPQPQGVEPVAQGVVSQQLPAVSPLPSVSSISVTSQVSSTGPSGMPSAPANLVPPQNIAQTPATQNGNLVQSVSQSPLIATNINLPLAQQIPLSSTQFSAQSLAQAIGSQIEDARRPAEPSLVGLPQTISGDSGGMSAVSDGSSSSLAASASLFPLKVLPLTTPLVDGEDESSSGASVVAIDNKIEQAMDLVKSHLMYAVREEVEVLKEQIKELIEKNSQLEQENNLLKTLASPEQLAQFQAQLQTGSPPATTQPQGTTQPPAQPASQGSGPTA.

A required for interaction with TGFBR1 and promotion of TGF-beta signaling region spans residues 1–98; that stretch reads MHQPPESTAA…SQAQLQAQPL (98 aa). Disordered stretches follow at residues 23 to 110, 125 to 288, and 602 to 623; these read AHPA…KKSG, ISSN…SPAS, and YSQAAPPVQTPLPGAPPPQQLQ. Residues 36–55 show a composition bias toward low complexity; the sequence is GSASALNAAGTGVGSSATSS. Residues 58–70 are compositionally biased toward pro residues; sequence FPPPSLLQPPPPA. The segment covering 84–100 has biased composition (low complexity); the sequence is SLNLLSQAQLQAQPLAP. Positions 133 to 142 are enriched in acidic residues; it reads EDTESYDDLD. Basic residues predominate over residues 216–240; it reads HPHHLHHHHHIHHGHHLQHGHHHPS. Over residues 241–250 the composition is skewed to low complexity; sequence HVAVASASIP. Positions 261–271 are enriched in polar residues; sequence KLSTTGSSDSI. S263 carries the post-translational modification Phosphoserine. Over residues 272–288 the composition is skewed to low complexity; it reads TPVAPTSAVSSSGSPAS. Positions 609–620 are enriched in pro residues; sequence VQTPLPGAPPPQ. Positions 1000–1021 are leucine-zipper; it reads VLKEQIKELIEKNSQLEQENNL. The segment at 1032 to 1068 is disordered; it reads AQFQAQLQTGSPPATTQPQGTTQPPAQPASQGSGPTA. Positions 1039-1068 are enriched in low complexity; sequence QTGSPPATTQPQGTTQPPAQPASQGSGPTA.

The protein belongs to the TSC-22/Dip/Bun family. As to quaternary structure, forms homodimers. Forms heterodimers. Component of a complex composed of TSC22D1 (via N-terminus), TGFBR1 and TGFBR2; the interaction between TSC22D1 and TGFBR1 is inhibited by SMAD7 and promoted by TGFB1. Interacts with SMAD7; the interaction requires TGF-beta and the interaction is inhibited by TGFBR1. Interacts with TPT1/fortilin; interaction results in the destabilization of TSC22D1 protein and prevents TSC22D1-mediated apoptosis. Interacts with SMAD4 (via N-terminus). Interacts with ACVRL1/ALK1, ACVR1/ALK2, BMPR1A/ALK3, ACVR1B/ALK4, BMPR1B/ALK6, ACVR2A/ACTRII, and BMPR2. Interacts with SMAD6. Interacts with TFE3; the interaction is enhanced in the presence of TGF-beta. Forms a heterodimer with TSC22D4/THG1. In terms of assembly, forms a heterodimer with TSC22D4/THG1. Interacts with histone H1-2. Interacts with GNL3.

It is found in the cytoplasm. The protein localises to the nucleus. It localises to the cell membrane. Its subcellular location is the mitochondrion. Functionally, transcriptional repressor. Acts on the C-type natriuretic peptide (CNP) promoter. Acts to promote CASP3-mediated apoptosis. Positively regulates TGF-beta signaling by interacting with SMAD7 which inhibits binding of SMAD7 to TGFBR1, preventing recruitment of SMURF ubiquitin ligases to TGFBR1 and inhibiting SMURF-mediated ubiquitination and degradation of TGFBR1. Contributes to enhancement of TGF-beta signaling by binding to and modulating the transcription activator activity of SMAD4. Promotes TGF-beta-induced transcription of COL1A2; via its interaction with TFE3 at E-boxes in the gene proximal promoter. Plays a role in the repression of hematopoietic precursor cell growth. Promotes IL2 deprivation-induced apoptosis in T-lymphocytes, via repression of TSC22D3/GILZ transcription and activation of the caspase cascade. Its function is as follows. May act to negatively regulate TGFB3 signaling and thereby inhibit cell death in mammary gland cells. Positively regulates cell death in response to TGFB3 during mammary gland involution. In Macaca fascicularis (Crab-eating macaque), this protein is TSC22 domain family protein 1.